The chain runs to 369 residues: Ferredoxin--NADP reductase 2 (369 aa).

Residues 1-23 are disordered; the sequence is MDLSIPNPVADTTKQVDGGSPAG. FAD is bound by residues Asp58, Gln66, Tyr71, Val111, Phe146, Asp311, and Thr352.

Belongs to the ferredoxin--NADP reductase type 2 family. Homodimer. Requires FAD as cofactor.

It catalyses the reaction 2 reduced [2Fe-2S]-[ferredoxin] + NADP(+) + H(+) = 2 oxidized [2Fe-2S]-[ferredoxin] + NADPH. The polypeptide is Ferredoxin--NADP reductase 2 (Cupriavidus necator (strain ATCC 17699 / DSM 428 / KCTC 22496 / NCIMB 10442 / H16 / Stanier 337) (Ralstonia eutropha)).